The chain runs to 246 residues: UDP-N-acetyl-D-mannosaminuronic acid transferase (246 aa).

This sequence belongs to the glycosyltransferase 26 family.

It carries out the reaction UDP-N-acetyl-alpha-D-mannosaminouronate + N-acetyl-alpha-D-glucosaminyl-di-trans,octa-cis-undecaprenyl diphosphate = beta-D-ManNAcA-(1-&gt;4)-alpha-D-GlcNAc-di-trans,octa-cis-undecaprenyl diphosphate + UDP + H(+). The protein operates within bacterial outer membrane biogenesis; enterobacterial common antigen biosynthesis. In terms of biological role, catalyzes the synthesis of Und-PP-GlcNAc-ManNAcA (Lipid II), the second lipid-linked intermediate involved in enterobacterial common antigen (ECA) synthesis. In Salmonella schwarzengrund (strain CVM19633), this protein is UDP-N-acetyl-D-mannosaminuronic acid transferase.